Here is a 359-residue protein sequence, read N- to C-terminus: Beta-hexosaminidase (359 aa).

Residues D64, R72, R138, and 168-169 (KH) contribute to the substrate site. The active-site Proton donor/acceptor is H181. The active-site Nucleophile is the D252.

Belongs to the glycosyl hydrolase 3 family. NagZ subfamily.

The protein localises to the cytoplasm. It catalyses the reaction Hydrolysis of terminal non-reducing N-acetyl-D-hexosamine residues in N-acetyl-beta-D-hexosaminides.. It functions in the pathway cell wall biogenesis; peptidoglycan recycling. Its function is as follows. Plays a role in peptidoglycan recycling by cleaving the terminal beta-1,4-linked N-acetylglucosamine (GlcNAc) from peptide-linked peptidoglycan fragments, giving rise to free GlcNAc, anhydro-N-acetylmuramic acid and anhydro-N-acetylmuramic acid-linked peptides. The polypeptide is Beta-hexosaminidase (Thiobacillus denitrificans (strain ATCC 25259 / T1)).